Reading from the N-terminus, the 486-residue chain is Palmitoleoyl-protein carboxylesterase notum2 (486 aa).

The first 18 residues, 1-18 (MRILEIFAILLILKEVRP), serve as a signal peptide directing secretion. Asn-183 is a glycosylation site (N-linked (GlcNAc...) asparagine). Residues Ser-223, Asp-331, and His-380 each act as charge relay system in the active site.

Belongs to the pectinacetylesterase family. Notum subfamily.

It localises to the secreted. It carries out the reaction [Wnt protein]-O-(9Z)-hexadecenoyl-L-serine + H2O = [Wnt protein]-L-serine + (9Z)-hexadecenoate + H(+). Its function is as follows. Carboxylesterase that acts as a key negative regulator of the Wnt signaling pathway by specifically mediating depalmitoleoylation of WNT proteins. Serine palmitoleoylation of WNT proteins is required for efficient binding to frizzled receptors. The chain is Palmitoleoyl-protein carboxylesterase notum2 from Xenopus laevis (African clawed frog).